The following is a 215-amino-acid chain: Adenylate kinase (215 aa).

10–15 (GAGKGT) is an ATP binding site. The interval 30–59 (STGDMLRAAVKAGSPLGQQVKGVMDSGGLV) is NMP. AMP is bound by residues Thr-31, Arg-36, 57–59 (GLV), 85–88 (GFPR), and Gln-92. Residues 122–159 (GRRVHPASGRVYHTEHNPPKVAGKDDVTGEDLIQREDD) are LID. ATP is bound by residues Arg-123 and 132–133 (VY). AMP contacts are provided by Arg-156 and Arg-167. Residue Gly-201 participates in ATP binding.

The protein belongs to the adenylate kinase family. As to quaternary structure, monomer.

Its subcellular location is the cytoplasm. It catalyses the reaction AMP + ATP = 2 ADP. It functions in the pathway purine metabolism; AMP biosynthesis via salvage pathway; AMP from ADP: step 1/1. Functionally, catalyzes the reversible transfer of the terminal phosphate group between ATP and AMP. Plays an important role in cellular energy homeostasis and in adenine nucleotide metabolism. This is Adenylate kinase from Pseudomonas paraeruginosa (strain DSM 24068 / PA7) (Pseudomonas aeruginosa (strain PA7)).